Here is a 461-residue protein sequence, read N- to C-terminus: Ribulose bisphosphate carboxylase (461 aa).

Position 112 (N112) interacts with substrate. K167 functions as the Proton acceptor in the catalytic mechanism. K169 contacts substrate. Residues K192, D194, and E195 each contribute to the Mg(2+) site. The residue at position 192 (K192) is an N6-carboxylysine. Catalysis depends on H288, which acts as the Proton acceptor. Positions 289, 322, and 369 each coordinate substrate.

It belongs to the RuBisCO large chain family. Type II subfamily. In terms of assembly, homodimer. Mg(2+) serves as cofactor.

The enzyme catalyses 2 (2R)-3-phosphoglycerate + 2 H(+) = D-ribulose 1,5-bisphosphate + CO2 + H2O. The catalysed reaction is D-ribulose 1,5-bisphosphate + O2 = 2-phosphoglycolate + (2R)-3-phosphoglycerate + 2 H(+). Its function is as follows. RuBisCO catalyzes two reactions: the carboxylation of D-ribulose 1,5-bisphosphate, the primary event in carbon dioxide fixation, as well as the oxidative fragmentation of the pentose substrate. Both reactions occur simultaneously and in competition at the same active site. This is Ribulose bisphosphate carboxylase from Rhodopseudomonas palustris (strain BisB18).